A 670-amino-acid polypeptide reads, in one-letter code: DNA ligase (670 aa).

Residues 34-38 (DAEYD), 83-84 (SL), and glutamate 112 each bind NAD(+). The N6-AMP-lysine intermediate role is filled by lysine 114. NAD(+) is bound by residues arginine 135, glutamate 169, lysine 285, and lysine 309. Cysteine 403, cysteine 406, cysteine 421, and cysteine 426 together coordinate Zn(2+). The 82-residue stretch at 589–670 (PASSVLAGKT…FLQEISREEQ (82 aa)) folds into the BRCT domain.

The protein belongs to the NAD-dependent DNA ligase family. LigA subfamily. Requires Mg(2+) as cofactor. Mn(2+) serves as cofactor.

The catalysed reaction is NAD(+) + (deoxyribonucleotide)n-3'-hydroxyl + 5'-phospho-(deoxyribonucleotide)m = (deoxyribonucleotide)n+m + AMP + beta-nicotinamide D-nucleotide.. DNA ligase that catalyzes the formation of phosphodiester linkages between 5'-phosphoryl and 3'-hydroxyl groups in double-stranded DNA using NAD as a coenzyme and as the energy source for the reaction. It is essential for DNA replication and repair of damaged DNA. This chain is DNA ligase, found in Geobacillus thermodenitrificans (strain NG80-2).